A 367-amino-acid chain; its full sequence is Alanine racemase (367 aa).

The active-site Proton acceptor; specific for D-alanine is Lys35. Residue Lys35 is modified to N6-(pyridoxal phosphate)lysine. Residue Arg130 coordinates substrate. Tyr259 functions as the Proton acceptor; specific for L-alanine in the catalytic mechanism. Position 307 (Met307) interacts with substrate.

The protein belongs to the alanine racemase family. The cofactor is pyridoxal 5'-phosphate.

It carries out the reaction L-alanine = D-alanine. It functions in the pathway amino-acid biosynthesis; D-alanine biosynthesis; D-alanine from L-alanine: step 1/1. Its function is as follows. Catalyzes the interconversion of L-alanine and D-alanine. May also act on other amino acids. The protein is Alanine racemase (alr) of Delftia acidovorans (strain DSM 14801 / SPH-1).